The chain runs to 668 residues: DNA ligase (668 aa).

Residues Asp-31–Asp-35, Ser-80–Leu-81, and Glu-111 each bind NAD(+). Lys-113 acts as the N6-AMP-lysine intermediate in catalysis. NAD(+) is bound by residues Arg-134, Glu-170, Lys-285, and Lys-309. Cys-403, Cys-406, Cys-421, and Cys-427 together coordinate Zn(2+). Residues Asn-587–Glu-668 form the BRCT domain.

Belongs to the NAD-dependent DNA ligase family. LigA subfamily. Requires Mg(2+) as cofactor. Mn(2+) is required as a cofactor.

It carries out the reaction NAD(+) + (deoxyribonucleotide)n-3'-hydroxyl + 5'-phospho-(deoxyribonucleotide)m = (deoxyribonucleotide)n+m + AMP + beta-nicotinamide D-nucleotide.. DNA ligase that catalyzes the formation of phosphodiester linkages between 5'-phosphoryl and 3'-hydroxyl groups in double-stranded DNA using NAD as a coenzyme and as the energy source for the reaction. It is essential for DNA replication and repair of damaged DNA. The chain is DNA ligase from Flavobacterium johnsoniae (strain ATCC 17061 / DSM 2064 / JCM 8514 / BCRC 14874 / CCUG 350202 / NBRC 14942 / NCIMB 11054 / UW101) (Cytophaga johnsonae).